The primary structure comprises 293 residues: Glutamyl-Q tRNA(Asp) synthetase (293 aa).

L-glutamate contacts are provided by residues 26–30 (RYAPS) and Asp62. The short motif at 29-39 (PSPTGALHLGN) is the 'HIGH' region element. Positions 118, 120, 131, and 135 each coordinate Zn(2+). Residues Tyr178 and Arg196 each contribute to the L-glutamate site. The short motif at 234 to 238 (KLSKR) is the 'KMSKS' region element. Lys237 contacts ATP.

It belongs to the class-I aminoacyl-tRNA synthetase family. GluQ subfamily. Requires Zn(2+) as cofactor.

In terms of biological role, catalyzes the tRNA-independent activation of glutamate in presence of ATP and the subsequent transfer of glutamate onto a tRNA(Asp). Glutamate is transferred on the 2-amino-5-(4,5-dihydroxy-2-cyclopenten-1-yl) moiety of the queuosine in the wobble position of the QUC anticodon. The chain is Glutamyl-Q tRNA(Asp) synthetase from Parasynechococcus marenigrum (strain WH8102).